The following is a 98-amino-acid chain: NADH-ubiquinone oxidoreductase chain 4L (98 aa).

3 consecutive transmembrane segments (helical) span residues 1–21 (MLSI…GVLI), 29–49 (TLLC…LLIT), and 59–79 (TPLI…ALLV).

The protein belongs to the complex I subunit 4L family. As to quaternary structure, core subunit of respiratory chain NADH dehydrogenase (Complex I) which is composed of 45 different subunits.

The protein resides in the mitochondrion inner membrane. The enzyme catalyses a ubiquinone + NADH + 5 H(+)(in) = a ubiquinol + NAD(+) + 4 H(+)(out). Its function is as follows. Core subunit of the mitochondrial membrane respiratory chain NADH dehydrogenase (Complex I) which catalyzes electron transfer from NADH through the respiratory chain, using ubiquinone as an electron acceptor. Part of the enzyme membrane arm which is embedded in the lipid bilayer and involved in proton translocation. The polypeptide is NADH-ubiquinone oxidoreductase chain 4L (MT-ND4L) (Sminthopsis crassicaudata (Fat-tailed dunnart)).